Here is a 305-residue protein sequence, read N- to C-terminus: Oxygen-dependent coproporphyrinogen-III oxidase (305 aa).

A substrate-binding site is contributed by Ser-98. 2 residues coordinate a divalent metal cation: His-102 and His-112. The Proton donor role is filled by His-112. 114 to 116 (NVR) is a substrate binding site. Positions 151 and 181 each coordinate a divalent metal cation. Residues 246 to 281 (YVEFNLVYDRGTLFGLQSGGRTESILMSMPPLARWE) are important for dimerization. 264 to 266 (GGR) lines the substrate pocket.

The protein belongs to the aerobic coproporphyrinogen-III oxidase family. In terms of assembly, homodimer. The cofactor is a divalent metal cation.

It localises to the cytoplasm. The enzyme catalyses coproporphyrinogen III + O2 + 2 H(+) = protoporphyrinogen IX + 2 CO2 + 2 H2O. Its pathway is porphyrin-containing compound metabolism; protoporphyrin-IX biosynthesis; protoporphyrinogen-IX from coproporphyrinogen-III (O2 route): step 1/1. Its function is as follows. Involved in the heme biosynthesis. Catalyzes the aerobic oxidative decarboxylation of propionate groups of rings A and B of coproporphyrinogen-III to yield the vinyl groups in protoporphyrinogen-IX. This is Oxygen-dependent coproporphyrinogen-III oxidase from Vibrio parahaemolyticus serotype O3:K6 (strain RIMD 2210633).